Reading from the N-terminus, the 192-residue chain is Flagellar transcriptional regulator FlhC (192 aa).

Cys-137, Cys-140, Cys-157, and Cys-160 together coordinate Zn(2+).

It belongs to the FlhC family. As to quaternary structure, heterohexamer composed of two FlhC and four FlhD subunits. Each FlhC binds a FlhD dimer, forming a heterotrimer, and a hexamer assembles by dimerization of two heterotrimers. It depends on Zn(2+) as a cofactor.

The protein localises to the cytoplasm. Functions in complex with FlhD as a master transcriptional regulator that regulates transcription of several flagellar and non-flagellar operons by binding to their promoter region. Activates expression of class 2 flagellar genes, including fliA, which is a flagellum-specific sigma factor that turns on the class 3 genes. Also regulates genes whose products function in a variety of physiological pathways. The protein is Flagellar transcriptional regulator FlhC of Escherichia coli O6:H1 (strain CFT073 / ATCC 700928 / UPEC).